Consider the following 219-residue polypeptide: MHTAWQEILKEEKEKDYFIRLWDFVKTAYRETTVYPPKDRIFHAFDAVAPQDVRCVILGQDPYHGPNQANGLSFSVNDGVAIPPSLRNMYKELMSDLGCPAPTTGNLEAWSNQGVFLLNTSLTVEAGKAGSHAKKGWESFTDRVIEVLGQQEQPIVFILWGNHAKSKKSLIDTNRHLVLESVHPSPLSASRGFFGSRPYSQTNDWLQQQNRTPIDWCIS.

Residue D61 is the Proton acceptor of the active site.

Belongs to the uracil-DNA glycosylase (UDG) superfamily. UNG family.

It localises to the cytoplasm. It carries out the reaction Hydrolyzes single-stranded DNA or mismatched double-stranded DNA and polynucleotides, releasing free uracil.. Excises uracil residues from the DNA which can arise as a result of misincorporation of dUMP residues by DNA polymerase or due to deamination of cytosine. The protein is Uracil-DNA glycosylase of Exiguobacterium sibiricum (strain DSM 17290 / CCUG 55495 / CIP 109462 / JCM 13490 / 255-15).